The primary structure comprises 629 residues: tRNA uridine 5-carboxymethylaminomethyl modification enzyme MnmG (629 aa).

FAD contacts are provided by residues 15–20 (GAGHAG), valine 127, and serine 182. A disordered region spans residues 203-227 (TPPRVKSSTIDYSKTEEQPGDDHPR). The span at 215 to 227 (SKTEEQPGDDHPR) shows a compositional bias: basic and acidic residues. 274 to 288 (GARYCPSIEDKIVRF) is an NAD(+) binding site. Glutamine 371 provides a ligand contact to FAD.

This sequence belongs to the MnmG family. As to quaternary structure, homodimer. Heterotetramer of two MnmE and two MnmG subunits. FAD is required as a cofactor.

The protein resides in the cytoplasm. Its function is as follows. NAD-binding protein involved in the addition of a carboxymethylaminomethyl (cmnm) group at the wobble position (U34) of certain tRNAs, forming tRNA-cmnm(5)s(2)U34. The chain is tRNA uridine 5-carboxymethylaminomethyl modification enzyme MnmG from Listeria welshimeri serovar 6b (strain ATCC 35897 / DSM 20650 / CCUG 15529 / CIP 8149 / NCTC 11857 / SLCC 5334 / V8).